The chain runs to 994 residues: Transposase for transposon Tn2501 (994 aa).

The protein belongs to the transposase 7 family.

Its function is as follows. Required for transposition of transposon Tn2501. The sequence is that of Transposase for transposon Tn2501 (tnpA) from Escherichia coli.